The chain runs to 56 residues: Large ribosomal subunit protein bL32 (56 aa).

The tract at residues 1 to 26 (MAVQQNKKSRSKRGMRRSHDALSTAQ) is disordered. The segment covering 7-16 (KKSRSKRGMR) has biased composition (basic residues).

It belongs to the bacterial ribosomal protein bL32 family.

The polypeptide is Large ribosomal subunit protein bL32 (Shewanella amazonensis (strain ATCC BAA-1098 / SB2B)).